Here is a 615-residue protein sequence, read N- to C-terminus: TORTIFOLIA1-like protein 3 (615 aa).

5 HEAT repeats span residues 44-81, 86-123, 125-163, 168-205, and 213-250; these read GNLQ…SLPL, PFLS…RTTK, PFYS…SASD, RLGQ…AGGL, and GGLK…MERN. The segment at 288–446 is disordered; the sequence is VPDLSEEVSP…HHVLSENPNS (159 aa). Positions 318–347 are enriched in polar residues; the sequence is RVGSTPAKSRTHLVNRSTPPGSSLATTARK. Basic and acidic residues predominate over residues 391–406; that stretch reads DEQHCDHDENAKETSH. Residues 407–426 are compositionally biased toward polar residues; that stretch reads SSHNTVQKLGGVSSSLNGNI. Residue Ser456 is modified to Phosphoserine.

This chain is TORTIFOLIA1-like protein 3, found in Arabidopsis thaliana (Mouse-ear cress).